The following is a 599-amino-acid chain: DNA primase (599 aa).

The segment at 38–62 (CPFHDEKTPSFTVSEDKQICHCFGC) adopts a CHC2-type zinc-finger fold. A Toprim domain is found at 260–341 (DEIVLLEGFM…NVFVIQLPSG (82 aa)). Mg(2+)-binding residues include E266, D310, and D312.

Belongs to the DnaG primase family. Monomer. Interacts with DnaB. Zn(2+) serves as cofactor. It depends on Mg(2+) as a cofactor.

It catalyses the reaction ssDNA + n NTP = ssDNA/pppN(pN)n-1 hybrid + (n-1) diphosphate.. In terms of biological role, RNA polymerase that catalyzes the synthesis of short RNA molecules used as primers for DNA polymerase during DNA replication. The protein is DNA primase of Staphylococcus aureus (strain COL).